Consider the following 296-residue polypeptide: Transcription factor Pur-alpha 1 (296 aa).

Position 1 is an N-acetylmethionine (M1). Disordered regions lie at residues 1-25 and 186-214; these read MEANSGGGGGAEGGRAVTGGGGGGG and IPGHGSQQPSSSEHNVDRTIDSPGQEETG. S207 carries the post-translational modification Phosphoserine.

This sequence belongs to the PUR DNA-binding protein family. Homodimer. Interacts with TCP20.

It localises to the nucleus. In terms of biological role, transcription factor that specifically binds the purine-rich double-stranded telomeric repeated sequence 5'-AAACCCTAA-3' found in promoter telo boxes. The chain is Transcription factor Pur-alpha 1 (PURA1) from Arabidopsis thaliana (Mouse-ear cress).